The sequence spans 241 residues: ATP synthase subunit a (241 aa).

5 consecutive transmembrane segments (helical) span residues 30–50 (GQVF…VLVG), 89–109 (LPFI…GALI), 128–148 (INTT…AGLS), 193–213 (LAVG…VMLL), and 214–234 (GLFT…FYIG).

The protein belongs to the ATPase A chain family. F-type ATPases have 2 components, CF(1) - the catalytic core - and CF(0) - the membrane proton channel. CF(1) has five subunits: alpha(3), beta(3), gamma(1), delta(1), epsilon(1). CF(0) has four main subunits: a, b, b' and c.

The protein resides in the cellular thylakoid membrane. In terms of biological role, key component of the proton channel; it plays a direct role in the translocation of protons across the membrane. The chain is ATP synthase subunit a from Synechococcus sp. (strain CC9605).